The chain runs to 360 residues: Photosystem II protein D1 (360 aa).

Helical transmembrane passes span 30 to 47 (YVGW…TAAA), 119 to 134 (HFLI…QWEL), and 143 to 157 (WICV…AAFA). Histidine 119 is a chlorophyll a binding site. Tyrosine 127 contacts pheophytin a. Residues aspartate 171 and glutamate 190 each contribute to the [CaMn4O5] cluster site. Residues 198–219 (FHMAGVAGMFGGSLFSAMHGSL) form a helical membrane-spanning segment. A chlorophyll a-binding site is contributed by histidine 199. A quinone contacts are provided by residues histidine 216 and 265 to 266 (SF). Histidine 216 lines the Fe cation pocket. A Fe cation-binding site is contributed by histidine 273. Residues 275–289 (FLAVFPVVCVWLTSM) traverse the membrane as a helical segment. Histidine 333, glutamate 334, aspartate 343, and alanine 345 together coordinate [CaMn4O5] cluster. Positions 346 to 360 (AAESTTVALSAPAIG) are excised as a propeptide.

Belongs to the reaction center PufL/M/PsbA/D family. As to quaternary structure, PSII is composed of 1 copy each of membrane proteins PsbA, PsbB, PsbC, PsbD, PsbE, PsbF, PsbH, PsbI, PsbJ, PsbK, PsbL, PsbM, PsbT, PsbX, PsbY, Psb30/Ycf12, peripheral proteins PsbO, CyanoQ (PsbQ), PsbU, PsbV and a large number of cofactors. It forms dimeric complexes. The cofactor is The D1/D2 heterodimer binds P680, chlorophylls that are the primary electron donor of PSII, and subsequent electron acceptors. It shares a non-heme iron and each subunit binds pheophytin, quinone, additional chlorophylls, carotenoids and lipids. D1 provides most of the ligands for the Mn4-Ca-O5 cluster of the oxygen-evolving complex (OEC). There is also a Cl(-1) ion associated with D1 and D2, which is required for oxygen evolution. The PSII complex binds additional chlorophylls, carotenoids and specific lipids.. Post-translationally, tyr-162 forms a radical intermediate that is referred to as redox-active TyrZ, YZ or Y-Z. C-terminally processed by CtpA; processing is essential to allow assembly of the oxygen-evolving complex and thus photosynthetic growth.

The protein resides in the cellular thylakoid membrane. It catalyses the reaction 2 a plastoquinone + 4 hnu + 2 H2O = 2 a plastoquinol + O2. Photosystem II (PSII) is a light-driven water:plastoquinone oxidoreductase that uses light energy to abstract electrons from H(2)O, generating O(2) and a proton gradient subsequently used for ATP formation. It consists of a core antenna complex that captures photons, and an electron transfer chain that converts photonic excitation into a charge separation. The D1/D2 (PsbA/PsbD) reaction center heterodimer binds P680, the primary electron donor of PSII as well as several subsequent electron acceptors. In Prochlorococcus marinus (strain MIT 9301), this protein is Photosystem II protein D1.